A 597-amino-acid chain; its full sequence is Aspartate--tRNA ligase (597 aa).

An L-aspartate-binding site is contributed by E180. The tract at residues 204-207 (QLFK) is aspartate. Position 226 (R226) interacts with L-aspartate. ATP is bound by residues 226–228 (RDE) and Q235. L-aspartate is bound at residue H454. E488 is a binding site for ATP. R495 serves as a coordination point for L-aspartate. 540 to 543 (GLDR) is a binding site for ATP.

This sequence belongs to the class-II aminoacyl-tRNA synthetase family. Type 1 subfamily. In terms of assembly, homodimer.

The protein localises to the cytoplasm. The catalysed reaction is tRNA(Asp) + L-aspartate + ATP = L-aspartyl-tRNA(Asp) + AMP + diphosphate. Functionally, catalyzes the attachment of L-aspartate to tRNA(Asp) in a two-step reaction: L-aspartate is first activated by ATP to form Asp-AMP and then transferred to the acceptor end of tRNA(Asp). The polypeptide is Aspartate--tRNA ligase (Clostridium perfringens (strain ATCC 13124 / DSM 756 / JCM 1290 / NCIMB 6125 / NCTC 8237 / Type A)).